We begin with the raw amino-acid sequence, 217 residues long: UPF0319 protein HS_1349 (217 aa).

The N-terminal stretch at Met1–Ala21 is a signal peptide.

It belongs to the UPF0319 family.

The polypeptide is UPF0319 protein HS_1349 (Histophilus somni (strain 129Pt) (Haemophilus somnus)).